The following is a 90-amino-acid chain: UPF0297 protein OEOE_1166 (90 aa).

This sequence belongs to the UPF0297 family.

The polypeptide is UPF0297 protein OEOE_1166 (Oenococcus oeni (strain ATCC BAA-331 / PSU-1)).